A 57-amino-acid chain; its full sequence is Cecropin-A (57 aa).

A signal peptide spans 1–21; the sequence is IFFFVFACLLALSAVSAAPEP.

Belongs to the cecropin family.

Its subcellular location is the secreted. In terms of biological role, cecropins have lytic and antibacterial activity against several Gram-positive and Gram-negative bacteria. The chain is Cecropin-A (CECA) from Spodoptera litura (Asian cotton leafworm).